Consider the following 389-residue polypeptide: Phospho-N-acetylmuramoyl-pentapeptide-transferase (389 aa).

The next 10 membrane-spanning stretches (helical) occupy residues 25 to 45 (RAVM…PAVI), 73 to 93 (TMGG…WADL), 97 to 117 (FIWI…VDDY), 135 to 155 (FWQS…VSEA), 190 to 210 (ISYP…IVGA), 222 to 242 (GLVI…AYVM), 259 to 279 (AGEL…FLWF), 287 to 307 (FMGD…AVIV), 311 to 331 (IVLF…MLQV), and 366 to 386 (QVVV…LSTL).

Belongs to the glycosyltransferase 4 family. MraY subfamily. Mg(2+) serves as cofactor.

It localises to the cell inner membrane. It catalyses the reaction UDP-N-acetyl-alpha-D-muramoyl-L-alanyl-gamma-D-glutamyl-meso-2,6-diaminopimeloyl-D-alanyl-D-alanine + di-trans,octa-cis-undecaprenyl phosphate = di-trans,octa-cis-undecaprenyl diphospho-N-acetyl-alpha-D-muramoyl-L-alanyl-D-glutamyl-meso-2,6-diaminopimeloyl-D-alanyl-D-alanine + UMP. It participates in cell wall biogenesis; peptidoglycan biosynthesis. Catalyzes the initial step of the lipid cycle reactions in the biosynthesis of the cell wall peptidoglycan: transfers peptidoglycan precursor phospho-MurNAc-pentapeptide from UDP-MurNAc-pentapeptide onto the lipid carrier undecaprenyl phosphate, yielding undecaprenyl-pyrophosphoryl-MurNAc-pentapeptide, known as lipid I. In Paraburkholderia phytofirmans (strain DSM 17436 / LMG 22146 / PsJN) (Burkholderia phytofirmans), this protein is Phospho-N-acetylmuramoyl-pentapeptide-transferase.